Here is a 143-residue protein sequence, read N- to C-terminus: Small ribosomal subunit protein uS12 (143 aa).

Basic residues predominate over residues 1-19; that stretch reads MGKPRGLRTARKHVNHRRD. Positions 1-23 are disordered; it reads MGKPRGLRTARKHVNHRRDQRWA. P62 is subject to 3-hydroxyproline.

Belongs to the universal ribosomal protein uS12 family. In terms of assembly, component of the 40S small ribosomal subunit. Hydroxylation at Pro-62 affects translation termination efficiency.

Its subcellular location is the cytoplasm. The protein resides in the cytosol. It is found in the rough endoplasmic reticulum. In Drosophila melanogaster (Fruit fly), this protein is Small ribosomal subunit protein uS12 (RpS23).